We begin with the raw amino-acid sequence, 329 residues long: GMP reductase (329 aa).

The active-site Thioimidate intermediate is C178. 207 to 230 provides a ligand contact to NADP(+); the sequence is VIADGGIRTHGDIAKSIRMGATMV.

The protein belongs to the IMPDH/GMPR family. GuaC type 2 subfamily.

The enzyme catalyses IMP + NH4(+) + NADP(+) = GMP + NADPH + 2 H(+). Functionally, catalyzes the irreversible NADPH-dependent deamination of GMP to IMP. It functions in the conversion of nucleobase, nucleoside and nucleotide derivatives of G to A nucleotides, and in maintaining the intracellular balance of A and G nucleotides. In Lactococcus lactis subsp. lactis (strain IL1403) (Streptococcus lactis), this protein is GMP reductase.